Reading from the N-terminus, the 265-residue chain is NAD kinase 1 (265 aa).

The Proton acceptor role is filled by Asp45. NAD(+) is bound by residues Asp45–Gly46, Asn122–Glu123, Arg148, Asp150, and Ala185.

Belongs to the NAD kinase family. It depends on a divalent metal cation as a cofactor.

Its subcellular location is the cytoplasm. It catalyses the reaction NAD(+) + ATP = ADP + NADP(+) + H(+). Involved in the regulation of the intracellular balance of NAD and NADP, and is a key enzyme in the biosynthesis of NADP. Catalyzes specifically the phosphorylation on 2'-hydroxyl of the adenosine moiety of NAD to yield NADP. In Bacillus cereus (strain ATCC 10987 / NRS 248), this protein is NAD kinase 1.